We begin with the raw amino-acid sequence, 153 residues long: Riboflavin synthase (153 aa).

The protein belongs to the DMRL synthase family.

It catalyses the reaction 2 6,7-dimethyl-8-(1-D-ribityl)lumazine + H(+) = 5-amino-6-(D-ribitylamino)uracil + riboflavin. Its pathway is cofactor biosynthesis; riboflavin biosynthesis; riboflavin from 2-hydroxy-3-oxobutyl phosphate and 5-amino-6-(D-ribitylamino)uracil: step 2/2. In Archaeoglobus fulgidus (strain ATCC 49558 / DSM 4304 / JCM 9628 / NBRC 100126 / VC-16), this protein is Riboflavin synthase (ribC).